The following is a 311-amino-acid chain: Coelenterazine h 2-monooxygenase (311 aa).

One can recognise an AB hydrolase-1 domain in the interval 45–291 (NAVIFLHGNA…KGLHFSQEDA (247 aa)). The substrate site is built by D162 and H285.

In terms of assembly, monomer.

It catalyses the reaction coelenterazine h + O2 = excited coelenteramide h monoanion + hnu + CO2 + H(+). Functionally, upon binding the substrate, the enzyme catalyzes an oxygenation, producing a very short-lived hydroperoxide that cyclizes into a dioxetanone structure, which collapses, releasing a CO(2) molecule. The spontaneous breakdown of the dioxetanone releases the energy (about 50 kcal/mole) that is necessary to generate the excited state of the coelenteramide product, which is the singlet form of the monoanion. In vivo the product undergoes the process of nonradiative energy transfer to an accessory protein, a green fluorescent protein (GFP), which results in green bioluminescence. In vitro, in the absence of GFP, the product emits blue light. The sequence is that of Coelenterazine h 2-monooxygenase from Renilla reniformis (Sea pansy).